A 285-amino-acid polypeptide reads, in one-letter code: 3',5'-nucleoside bisphosphate phosphatase (285 aa).

Residues His7, His9, Asp14, His39, Glu64, and His75 each coordinate Mn(2+). Residues Asp14 and His39 each contribute to the substrate site. Residues 99–102 and 134–135 each bind substrate; these read RLER and RT. 3 residues coordinate Mn(2+): His191, Asp248, and His250. His250 provides a ligand contact to substrate.

Belongs to the PHP family. In terms of assembly, monomer. Mn(2+) is required as a cofactor.

The catalysed reaction is a ribonucleoside 3',5'-bisphosphate + H2O = a ribonucleoside 5'-phosphate + phosphate. In terms of biological role, hydrolyzes 3',5'-bisphosphonucleosides (pGp, pCp, pUp, and pIp) to nucleoside 5'-phosphate and orthophosphate. Has similar catalytic efficiencies with all the bases. Also shows activity with ribonucleoside 2'-deoxyribonucleoside 3',5'-bisphosphates. Does not show activity with nucleoside 2',5'-bisphosphates. The sequence is that of 3',5'-nucleoside bisphosphate phosphatase from Chromobacterium violaceum (strain ATCC 12472 / DSM 30191 / JCM 1249 / CCUG 213 / NBRC 12614 / NCIMB 9131 / NCTC 9757 / MK).